The following is a 172-amino-acid chain: Cytochrome c oxidase subunit 4 isoform 2, mitochondrial (172 aa).

Residues 1–34 (MFSRAARSLVMRTGLRTRGTGTHSPGDAAGSQRR) constitute a mitochondrion transit peptide. Positions 13 to 22 (TGLRTRGTGT) are enriched in low complexity. Residues 13–32 (TGLRTRGTGTHSPGDAAGSQ) form a disordered region. Over 35–101 (MTPYVDCYAQ…TFAEMNHRSN (67 aa)) the chain is Mitochondrial matrix. A helical membrane pass occupies residues 102 to 127 (EWKTVMGCVFFFIGFTALVIWWQRVY). The Mitochondrial intermembrane portion of the chain corresponds to 128–172 (VFPKKVVTLTEERKAQQLQRLLDMKSNPIQGLAAHWDYEKKEWKK).

This sequence belongs to the cytochrome c oxidase IV family. Component of the cytochrome c oxidase (complex IV, CIV), a multisubunit enzyme composed of 14 subunits. The complex is composed of a catalytic core of 3 subunits MT-CO1, MT-CO2 and MT-CO3, encoded in the mitochondrial DNA, and 11 supernumerary subunits COX4I, COX5A, COX5B, COX6A, COX6B, COX6C, COX7A, COX7B, COX7C, COX8 and NDUFA4, which are encoded in the nuclear genome. The complex exists as a monomer or a dimer and forms supercomplexes (SCs) in the inner mitochondrial membrane with NADH-ubiquinone oxidoreductase (complex I, CI) and ubiquinol-cytochrome c oxidoreductase (cytochrome b-c1 complex, complex III, CIII), resulting in different assemblies (supercomplex SCI(1)III(2)IV(1) and megacomplex MCI(2)III(2)IV(2)).

The protein localises to the mitochondrion inner membrane. Its pathway is energy metabolism; oxidative phosphorylation. Component of the cytochrome c oxidase, the last enzyme in the mitochondrial electron transport chain which drives oxidative phosphorylation. The respiratory chain contains 3 multisubunit complexes succinate dehydrogenase (complex II, CII), ubiquinol-cytochrome c oxidoreductase (cytochrome b-c1 complex, complex III, CIII) and cytochrome c oxidase (complex IV, CIV), that cooperate to transfer electrons derived from NADH and succinate to molecular oxygen, creating an electrochemical gradient over the inner membrane that drives transmembrane transport and the ATP synthase. Cytochrome c oxidase is the component of the respiratory chain that catalyzes the reduction of oxygen to water. Electrons originating from reduced cytochrome c in the intermembrane space (IMS) are transferred via the dinuclear copper A center (CU(A)) of subunit 2 and heme A of subunit 1 to the active site in subunit 1, a binuclear center (BNC) formed by heme A3 and copper B (CU(B)). The BNC reduces molecular oxygen to 2 water molecules using 4 electrons from cytochrome c in the IMS and 4 protons from the mitochondrial matrix. This is Cytochrome c oxidase subunit 4 isoform 2, mitochondrial (Cox4i2) from Mus musculus (Mouse).